The following is an 82-amino-acid chain: Protein ImpC (82 aa).

It belongs to the DinI family.

The imp operon is involved in UV protection and mutation, however the ImpC protein is not essential for these functions. The sequence is that of Protein ImpC (impC) from Salmonella typhimurium.